We begin with the raw amino-acid sequence, 193 residues long: Peptidyl-tRNA hydrolase (193 aa).

Y15 contributes to the tRNA binding site. The active-site Proton acceptor is the H20. TRNA is bound by residues F65, N67, and N113.

This sequence belongs to the PTH family. Monomer.

It is found in the cytoplasm. The enzyme catalyses an N-acyl-L-alpha-aminoacyl-tRNA + H2O = an N-acyl-L-amino acid + a tRNA + H(+). Functionally, hydrolyzes ribosome-free peptidyl-tRNAs (with 1 or more amino acids incorporated), which drop off the ribosome during protein synthesis, or as a result of ribosome stalling. Catalyzes the release of premature peptidyl moieties from peptidyl-tRNA molecules trapped in stalled 50S ribosomal subunits, and thus maintains levels of free tRNAs and 50S ribosomes. The chain is Peptidyl-tRNA hydrolase from Ehrlichia ruminantium (strain Gardel).